A 250-amino-acid chain; its full sequence is Cell division protein ZapD (250 aa).

It belongs to the ZapD family. Interacts with FtsZ.

The protein localises to the cytoplasm. Functionally, cell division factor that enhances FtsZ-ring assembly. Directly interacts with FtsZ and promotes bundling of FtsZ protofilaments, with a reduction in FtsZ GTPase activity. The polypeptide is Cell division protein ZapD (Yersinia pestis bv. Antiqua (strain Antiqua)).